Consider the following 192-residue polypeptide: Phage-like element PBSX protein XkdU (192 aa).

To B.subtilis YqcA.

This chain is Phage-like element PBSX protein XkdU (xkdU), found in Bacillus subtilis (strain 168).